The sequence spans 297 residues: uncharacterized protein (297 aa).

The interval 1–44 is disordered; the sequence is MQKSKSIFIPKAFAPQQQAQAPPSKLDNKDPSVEGEGASKPKDD. Residues 10–23 are compositionally biased toward low complexity; sequence PKAFAPQQQAQAPP. Positions 26–44 are enriched in basic and acidic residues; sequence LDNKDPSVEGEGASKPKDD.

This is an uncharacterized protein from Invertebrate iridescent virus 3 (IIV-3).